The chain runs to 810 residues: DNA replication licensing factor mcm-6 (810 aa).

The region spanning 346–553 (IEKNIVDSLF…VTDYAIARRI (208 aa)) is the MCM domain. Residues Ser400, Thr401, Ala402, Lys403, Ser404, and Asn505 each contribute to the ATP site. Residues 529-532 (SRFD) carry the Arginine finger motif. Residues Arg622 and Glu625 each coordinate ADP. The interval 685–705 (KENQGGDDDMEHDGEKDETAK) is disordered.

It belongs to the MCM family. Component of the mcm2-7 complex. The complex forms a toroidal hexameric ring with the proposed subunit order mcm2-mcm6-mcm4-mcm7-mcm3-mcm5 (By simililarity).

The protein resides in the nucleus. It carries out the reaction ATP + H2O = ADP + phosphate + H(+). Its function is as follows. Acts as a component of the MCM2-7 complex (MCM complex) which is the replicative helicase essential for 'once per cell cycle' DNA replication initiation and elongation in eukaryotic cells. Core component of CDC45-MCM-GINS (CMG) helicase, the molecular machine that unwinds template DNA during replication, and around which the replisome is built. The active ATPase sites in the MCM2-7 ring are formed through the interaction surfaces of two neighboring subunits such that a critical structure of a conserved arginine finger motif is provided in trans relative to the ATP-binding site of the Walker A box of the adjacent subunit. The six ATPase active sites, however, are likely to contribute differentially to the complex helicase activity. In Caenorhabditis briggsae, this protein is DNA replication licensing factor mcm-6.